Here is a 130-residue protein sequence, read N- to C-terminus: Small ribosomal subunit protein uS9 (130 aa).

The protein belongs to the universal ribosomal protein uS9 family.

This chain is Small ribosomal subunit protein uS9, found in Haemophilus influenzae (strain 86-028NP).